The sequence spans 326 residues: 2-dehydropantoate 2-reductase (326 aa).

Residues 7–12 and Asn-103 contribute to the NADP(+) site; that span reads GAGAIG. Asn-103 is a binding site for substrate. Lys-205 acts as the Proton donor in catalysis. Asn-209, Asn-213, and Ser-274 together coordinate substrate. Glu-286 is an NADP(+) binding site.

The protein belongs to the ketopantoate reductase family.

It localises to the cytoplasm. It carries out the reaction (R)-pantoate + NADP(+) = 2-dehydropantoate + NADPH + H(+). It functions in the pathway cofactor biosynthesis; (R)-pantothenate biosynthesis; (R)-pantoate from 3-methyl-2-oxobutanoate: step 2/2. Catalyzes the NADPH-dependent reduction of ketopantoate into pantoic acid. In Mesorhizobium japonicum (strain LMG 29417 / CECT 9101 / MAFF 303099) (Mesorhizobium loti (strain MAFF 303099)), this protein is 2-dehydropantoate 2-reductase.